Here is a 785-residue protein sequence, read N- to C-terminus: Endonuclease MutS2 (785 aa).

332-339 (GPNTGGKT) is a binding site for ATP. The region spanning 710–785 (IDLRGLDAEE…GDGATIVELK (76 aa)) is the Smr domain.

The protein belongs to the DNA mismatch repair MutS family. MutS2 subfamily. As to quaternary structure, homodimer. Binds to stalled ribosomes, contacting rRNA.

Functionally, endonuclease that is involved in the suppression of homologous recombination and thus may have a key role in the control of bacterial genetic diversity. Acts as a ribosome collision sensor, splitting the ribosome into its 2 subunits. Detects stalled/collided 70S ribosomes which it binds and splits by an ATP-hydrolysis driven conformational change. Acts upstream of the ribosome quality control system (RQC), a ribosome-associated complex that mediates the extraction of incompletely synthesized nascent chains from stalled ribosomes and their subsequent degradation. Probably generates substrates for RQC. The protein is Endonuclease MutS2 of Clostridium botulinum (strain Eklund 17B / Type B).